The chain runs to 348 residues: Protein RecA (348 aa).

An ATP-binding site is contributed by 65 to 72 (GPESSGKT).

The protein belongs to the RecA family.

It is found in the cytoplasm. Functionally, can catalyze the hydrolysis of ATP in the presence of single-stranded DNA, the ATP-dependent uptake of single-stranded DNA by duplex DNA, and the ATP-dependent hybridization of homologous single-stranded DNAs. It interacts with LexA causing its activation and leading to its autocatalytic cleavage. The protein is Protein RecA of Vibrio anguillarum (Listonella anguillarum).